The sequence spans 254 residues: Putative electron transfer flavoprotein subunit YdiQ (254 aa).

The protein belongs to the ETF beta-subunit/FixA family. As to quaternary structure, ydiR and YdiQ form a heterodimer.

May play a role in a redox process. This is Putative electron transfer flavoprotein subunit YdiQ (ydiQ) from Escherichia coli (strain K12).